The sequence spans 519 residues: Pleckstrin homology domain-containing family A member 8 (519 aa).

The PH domain occupies 1-93; that stretch reads MEGVLYKWTN…WLVALGSAKA (93 aa). Thr-139 is subject to Phosphothreonine. Ser-145 bears the Phosphoserine mark. Residue Thr-153 is modified to Phosphothreonine. Residues 275 to 302 form a disordered region; it reads GEENLESHDKDPAQPGSDSVCSPESPWE. The glycolipid transfer protein homology domain stretch occupies residues 330–473; sequence IPTEAFLASC…EDFVAALTIK (144 aa).

As to quaternary structure, homodimer. Interacts with ARF1; the interaction together with phosphatidylinositol 4-phosphate binding is required for FAPP2 GlcCer transfer ability.

It is found in the golgi apparatus. It localises to the trans-Golgi network membrane. Its subcellular location is the membrane. Its function is as follows. Cargo transport protein that is required for apical transport from the trans-Golgi network (TGN). Transports AQP2 from the trans-Golgi network (TGN) to sites of AQP2 phosphorylation. Mediates the non-vesicular transport of glucosylceramide (GlcCer) from the trans-Golgi network (TGN) to the plasma membrane and plays a pivotal role in the synthesis of complex glycosphingolipids. Binding of both phosphatidylinositol 4-phosphate (PIP) and ARF1 are essential for the GlcCer transfer ability. Also required for primary cilium formation, possibly by being involved in the transport of raft lipids to the apical membrane, and for membrane tubulation. The protein is Pleckstrin homology domain-containing family A member 8 (Plekha8) of Mus musculus (Mouse).